The following is a 197-amino-acid chain: Probable nicotinate-nucleotide adenylyltransferase (197 aa).

The protein belongs to the NadD family.

The catalysed reaction is nicotinate beta-D-ribonucleotide + ATP + H(+) = deamido-NAD(+) + diphosphate. It participates in cofactor biosynthesis; NAD(+) biosynthesis; deamido-NAD(+) from nicotinate D-ribonucleotide: step 1/1. In terms of biological role, catalyzes the reversible adenylation of nicotinate mononucleotide (NaMN) to nicotinic acid adenine dinucleotide (NaAD). The chain is Probable nicotinate-nucleotide adenylyltransferase from Bordetella avium (strain 197N).